Reading from the N-terminus, the 176-residue chain is Large ribosomal subunit protein uL6 (176 aa).

Over residues 151–170 the composition is skewed to basic and acidic residues; it reads RPPEPYKGKGVRYADEQVRR. Residues 151–176 form a disordered region; the sequence is RPPEPYKGKGVRYADEQVRRKEAKKK.

Belongs to the universal ribosomal protein uL6 family. As to quaternary structure, part of the 50S ribosomal subunit.

In terms of biological role, this protein binds to the 23S rRNA, and is important in its secondary structure. It is located near the subunit interface in the base of the L7/L12 stalk, and near the tRNA binding site of the peptidyltransferase center. The chain is Large ribosomal subunit protein uL6 from Shewanella pealeana (strain ATCC 700345 / ANG-SQ1).